The sequence spans 162 residues: Dihydrofolate reductase (162 aa).

The DHFR domain occupies 3–161; that stretch reads KITIIAACAE…VAYTFVHYLG (159 aa). 7-9 is a binding site for substrate; it reads IAA. Residues 8 to 9 and 16 to 21 contribute to the NADP(+) site; these read AA and IGAGNA. Substrate is bound at residue D29. 45 to 48 provides a ligand contact to NADP(+); it reads GRKT. R60 serves as a coordination point for substrate. Residues 65-68 and 98-103 contribute to the NADP(+) site; these read ISRQ and MGGAQI. T117 provides a ligand contact to substrate.

Belongs to the dihydrofolate reductase family.

The enzyme catalyses (6S)-5,6,7,8-tetrahydrofolate + NADP(+) = 7,8-dihydrofolate + NADPH + H(+). It functions in the pathway cofactor biosynthesis; tetrahydrofolate biosynthesis; 5,6,7,8-tetrahydrofolate from 7,8-dihydrofolate: step 1/1. In terms of biological role, key enzyme in folate metabolism. Catalyzes an essential reaction for de novo glycine and purine synthesis, and for DNA precursor synthesis. The sequence is that of Dihydrofolate reductase (folA) from Neisseria gonorrhoeae.